Here is a 198-residue protein sequence, read N- to C-terminus: Tumor necrosis factor receptor superfamily member 22 (198 aa).

The Cytoplasmic portion of the chain corresponds to 1-20 (MFGFFCSLVSSLSRWFLWRR). The helical; Signal-anchor for type II membrane protein transmembrane segment at 21–41 (LLLLLLLLLLNLPLQVKFAML) threads the bilayer. Over 42–198 (ELHSFKCPAG…SVVVFRIIRR (157 aa)) the chain is Extracellular. 3 TNFR-Cys repeats span residues 47-82 (KCPAGEYWSKDVCCKNCSAGTFVKAPCEIPHTQGQC), 84-124 (KCHP…DRKC), and 125-165 (QCRT…NTVC). Disulfide bonds link cysteine 48/cysteine 59, cysteine 60/cysteine 73, cysteine 63/cysteine 82, cysteine 85/cysteine 100, cysteine 103/cysteine 116, cysteine 106/cysteine 124, cysteine 126/cysteine 141, cysteine 144/cysteine 157, and cysteine 147/cysteine 165. An N-linked (GlcNAc...) asparagine glycan is attached at asparagine 62. Residue asparagine 158 is glycosylated (N-linked (GlcNAc...) asparagine).

As to expression, ubiquitous.

The protein localises to the cell membrane. The protein resides in the secreted. In terms of biological role, receptor for the cytotoxic ligand TNFSF10/TRAIL. Lacks a cytoplasmic death domain and hence is not capable of inducing apoptosis. Protects cells against TRAIL mediated apoptosis possibly through ligand competition. Cannot induce the NF-kappa-B pathway. In Mus musculus (Mouse), this protein is Tumor necrosis factor receptor superfamily member 22 (Tnfrsf22).